A 406-amino-acid chain; its full sequence is L-methionine gamma-lyase (406 aa).

Pyridoxal 5'-phosphate is bound by residues 76-78 (YQR) and 106-107 (GM). L-homocysteine is bound at residue Y132. Residue 219–221 (SAT) participates in pyridoxal 5'-phosphate binding. K222 is modified (N6-(pyridoxal phosphate)lysine). R380 is a binding site for L-homocysteine. R380 lines the L-methionine pocket.

Belongs to the trans-sulfuration enzymes family. L-methionine gamma-lyase subfamily. As to quaternary structure, homotetramer. The cofactor is pyridoxal 5'-phosphate.

It carries out the reaction L-methionine + H2O = methanethiol + 2-oxobutanoate + NH4(+). The enzyme catalyses L-homocysteine + H2O = 2-oxobutanoate + hydrogen sulfide + NH4(+) + H(+). With respect to regulation, is inhibited in vitro by carbonyl reagents, completely inactivated by DL-propargylglycine, and unaffected by metal-chelating agents. Its function is as follows. Catalyzes the alpha,gamma-elimination of L-methionine to produce methanethiol, 2-oxobutanoate and ammonia. May be responsible for the production of methanethiol associated with desirable Cheddar-type sulfur notes during cheese ripening. Is also able to catalyze the alpha,gamma-elimination of L-homocysteine and DL-selenomethionine, but has no activity toward L-cysteine, L-cystathionine, S-adenosyl-L-homocysteine and D-methionine. The protein is L-methionine gamma-lyase of Brevibacterium aurantiacum.